The chain runs to 131 residues: Large ribosomal subunit protein bL12 (131 aa).

Belongs to the bacterial ribosomal protein bL12 family. In terms of assembly, homodimer. Part of the ribosomal stalk of the 50S ribosomal subunit. Forms a multimeric L10(L12)X complex, where L10 forms an elongated spine to which 2 to 4 L12 dimers bind in a sequential fashion. Binds GTP-bound translation factors.

Its function is as follows. Forms part of the ribosomal stalk which helps the ribosome interact with GTP-bound translation factors. Is thus essential for accurate translation. The chain is Large ribosomal subunit protein bL12 from Tropheryma whipplei (strain Twist) (Whipple's bacillus).